The primary structure comprises 119 residues: Large ribosomal subunit protein bL20 (119 aa).

Belongs to the bacterial ribosomal protein bL20 family.

Its function is as follows. Binds directly to 23S ribosomal RNA and is necessary for the in vitro assembly process of the 50S ribosomal subunit. It is not involved in the protein synthesizing functions of that subunit. This chain is Large ribosomal subunit protein bL20, found in Nitrosococcus oceani (strain ATCC 19707 / BCRC 17464 / JCM 30415 / NCIMB 11848 / C-107).